A 385-amino-acid polypeptide reads, in one-letter code: Putative glutamate--cysteine ligase 2 (385 aa).

The protein belongs to the glutamate--cysteine ligase type 2 family. YbdK subfamily.

It carries out the reaction L-cysteine + L-glutamate + ATP = gamma-L-glutamyl-L-cysteine + ADP + phosphate + H(+). In terms of biological role, ATP-dependent carboxylate-amine ligase which exhibits weak glutamate--cysteine ligase activity. The polypeptide is Putative glutamate--cysteine ligase 2 (Solibacter usitatus (strain Ellin6076)).